Here is a 194-residue protein sequence, read N- to C-terminus: Peptidyl-tRNA hydrolase (194 aa).

Tyrosine 16 provides a ligand contact to tRNA. The active-site Proton acceptor is the histidine 21. Residues phenylalanine 67, asparagine 69, and asparagine 115 each contribute to the tRNA site.

It belongs to the PTH family. As to quaternary structure, monomer.

It localises to the cytoplasm. It catalyses the reaction an N-acyl-L-alpha-aminoacyl-tRNA + H2O = an N-acyl-L-amino acid + a tRNA + H(+). In terms of biological role, hydrolyzes ribosome-free peptidyl-tRNAs (with 1 or more amino acids incorporated), which drop off the ribosome during protein synthesis, or as a result of ribosome stalling. Catalyzes the release of premature peptidyl moieties from peptidyl-tRNA molecules trapped in stalled 50S ribosomal subunits, and thus maintains levels of free tRNAs and 50S ribosomes. The protein is Peptidyl-tRNA hydrolase of Escherichia coli O81 (strain ED1a).